Consider the following 167-residue polypeptide: Large ribosomal subunit protein bL9 (167 aa).

The protein belongs to the bacterial ribosomal protein bL9 family.

Its function is as follows. Binds to the 23S rRNA. The protein is Large ribosomal subunit protein bL9 of Chlamydia muridarum (strain MoPn / Nigg).